The sequence spans 305 residues: HPr kinase/phosphorylase (305 aa).

Residues His138 and Lys159 contribute to the active site. Residue 153–160 (GESGIGKS) coordinates ATP. Position 160 (Ser160) interacts with Mg(2+). The active-site Proton acceptor; for phosphorylation activity. Proton donor; for dephosphorylation activity is the Asp177. Residues 201 to 210 (IEIRGIGILD) form an important for the catalytic mechanism of both phosphorylation and dephosphorylation region. Glu202 contributes to the Mg(2+) binding site. The active site involves Arg243. The important for the catalytic mechanism of dephosphorylation stretch occupies residues 264-269 (PVRPGR).

It belongs to the HPrK/P family. Homohexamer. Mg(2+) is required as a cofactor.

It catalyses the reaction [HPr protein]-L-serine + ATP = [HPr protein]-O-phospho-L-serine + ADP + H(+). It carries out the reaction [HPr protein]-O-phospho-L-serine + phosphate + H(+) = [HPr protein]-L-serine + diphosphate. Functionally, catalyzes the ATP- as well as the pyrophosphate-dependent phosphorylation of a specific serine residue in HPr, a phosphocarrier protein of the phosphoenolpyruvate-dependent sugar phosphotransferase system (PTS). HprK/P also catalyzes the pyrophosphate-producing, inorganic phosphate-dependent dephosphorylation (phosphorolysis) of seryl-phosphorylated HPr (P-Ser-HPr). The two antagonistic activities of HprK/P are regulated by several intracellular metabolites, which change their concentration in response to the absence or presence of rapidly metabolisable carbon sources (glucose, fructose, etc.) in the growth medium. Therefore, by controlling the phosphorylation state of HPr, HPrK/P is a sensor enzyme that plays a major role in the regulation of carbon metabolism and sugar transport: it mediates carbon catabolite repression (CCR), and regulates PTS-catalyzed carbohydrate uptake and inducer exclusion. This chain is HPr kinase/phosphorylase, found in Thermoanaerobacter pseudethanolicus (strain ATCC 33223 / 39E) (Clostridium thermohydrosulfuricum).